A 320-amino-acid polypeptide reads, in one-letter code: MKQEKHGVLLVNLGTPDAPTSSAVKRYLKEFLSDDRVVDTAPLIWWPILNGAILPIRSPRVAKLYQSVWMDEGSPLLVYSRRQQRALAARMPNTPVELGMSYGSPSLAEAIDKLLAQGVTNLVVLPLYPQYSCSTSAAVWDGVARILKGYRRLPSVSFIRDYAEHPAYIAALRQSVEHSFAEHGQPDRLVLSFHGIPKRYARLGDDYPQRCEDTLRALTATLPLAPERVMMTYQSRFGREPWLTPYTDETLKGLPAQGVKHIQLICPGFSADCLETLEEIKEQNREIFLKAGGEKFEYISALNDEPAHIDMMQQLVAQRF.

The Fe cation site is built by H194 and E275.

It belongs to the ferrochelatase family.

Its subcellular location is the cytoplasm. The catalysed reaction is heme b + 2 H(+) = protoporphyrin IX + Fe(2+). It participates in porphyrin-containing compound metabolism; protoheme biosynthesis; protoheme from protoporphyrin-IX: step 1/1. Its function is as follows. Catalyzes the ferrous insertion into protoporphyrin IX. The chain is Ferrochelatase from Serratia proteamaculans (strain 568).